The sequence spans 349 residues: D-alanine--D-alanine ligase (349 aa).

The 203-residue stretch at 133 to 335 (QVLESATTIP…YSVLIEELVS (203 aa)) folds into the ATP-grasp domain. 163–218 (EEKLIYPVFVKPANMGSSVGISKAENRTDLKQAIALALKYDSRVLIEQGVDAREIE) serves as a coordination point for ATP. Residues Asp-289, Glu-302, and Asn-304 each coordinate Mg(2+).

The protein belongs to the D-alanine--D-alanine ligase family. It depends on Mg(2+) as a cofactor. Mn(2+) serves as cofactor.

Its subcellular location is the cytoplasm. It carries out the reaction 2 D-alanine + ATP = D-alanyl-D-alanine + ADP + phosphate + H(+). Its pathway is cell wall biogenesis; peptidoglycan biosynthesis. In terms of biological role, cell wall formation. The polypeptide is D-alanine--D-alanine ligase (Streptococcus mutans serotype c (strain ATCC 700610 / UA159)).